The chain runs to 228 residues: Ribulose-phosphate 3-epimerase, cytoplasmic isoform (228 aa).

Ser12 lines the substrate pocket. 3 residues coordinate a divalent metal cation: His37, Asp39, and His70. Asp39 serves as the catalytic Proton acceptor. Substrate contacts are provided by residues His70, 150-153 (GFGG), 179-181 (DGG), and 201-202 (GS). Asp179 serves as a coordination point for a divalent metal cation. Residue Asp179 is the Proton donor of the active site.

Belongs to the ribulose-phosphate 3-epimerase family. In terms of assembly, homodimer. Co(2+) is required as a cofactor. It depends on Fe(2+) as a cofactor. The cofactor is Mn(2+). Zn(2+) serves as cofactor. In terms of tissue distribution, predominantly accumulates in roots and seedlings.

It is found in the cytoplasm. The enzyme catalyses D-ribulose 5-phosphate = D-xylulose 5-phosphate. Its pathway is carbohydrate degradation; pentose phosphate pathway; D-xylulose 5-phosphate from D-ribulose 5-phosphate (non-oxidative stage): step 1/1. Functionally, catalyzes the reversible epimerization of D-ribulose 5-phosphate to D-xylulose 5-phosphate. The protein is Ribulose-phosphate 3-epimerase, cytoplasmic isoform of Oryza sativa subsp. japonica (Rice).